We begin with the raw amino-acid sequence, 584 residues long: Glutathione hydrolase proenzyme (584 aa).

The first 25 residues, 1 to 25 (MAPAAMNLLCTVLYLLSSFAQVSDA), serve as a signal peptide directing secretion. Asn-111 is a glycosylation site (N-linked (GlcNAc...) asparagine). Arg-120 serves as a coordination point for L-glutamate. N-linked (GlcNAc...) asparagine glycosylation is found at Asn-135, Asn-262, Asn-272, Asn-350, and Asn-370. The active-site Nucleophile is the Thr-395. L-glutamate is bound by residues Thr-413, Glu-434, and 465-466 (SS). A glycan (N-linked (GlcNAc...) asparagine) is linked at Asn-547.

Belongs to the gamma-glutamyltransferase family. As to quaternary structure, heterodimer composed of the light and heavy chains. The active site is located in the light chain. Post-translationally, cleaved by autocatalysis into a large and a small subunit and the autocatalytic cleavage is essential to the functional activation of the enzyme.

It localises to the secreted. The enzyme catalyses an N-terminal (5-L-glutamyl)-[peptide] + an alpha-amino acid = 5-L-glutamyl amino acid + an N-terminal L-alpha-aminoacyl-[peptide]. The catalysed reaction is glutathione + H2O = L-cysteinylglycine + L-glutamate. It carries out the reaction an S-substituted glutathione + H2O = an S-substituted L-cysteinylglycine + L-glutamate. It catalyses the reaction leukotriene C4 + H2O = leukotriene D4 + L-glutamate. It functions in the pathway sulfur metabolism; glutathione metabolism. In terms of biological role, cleaves the gamma-glutamyl bond of extracellular glutathione (gamma-Glu-Cys-Gly), glutathione conjugates, and other gamma-glutamyl compounds. The metabolism of glutathione releases free glutamate and the dipeptide cysteinyl-glycine, which is hydrolyzed to cysteine and glycine by dipeptidases. In the presence of high concentrations of dipeptides and some amino acids, can also catalyze a transpeptidation reaction, transferring the gamma-glutamyl moiety to an acceptor amino acid to form a new gamma-glutamyl compound. Initiates extracellular glutathione (GSH) breakdown, provides cells with a local cysteine supply and contributes to maintain intracellular GSH level. It is part of the cell antioxidant defense mechanism. The sequence is that of Glutathione hydrolase proenzyme from Arthroderma benhamiae (strain ATCC MYA-4681 / CBS 112371) (Trichophyton mentagrophytes).